A 197-amino-acid polypeptide reads, in one-letter code: UPF0200 protein MJ1399 (197 aa).

8–15 (GMPGAGKS) is an ATP binding site.

Belongs to the UPF0200 family.

This is UPF0200 protein MJ1399 from Methanocaldococcus jannaschii (strain ATCC 43067 / DSM 2661 / JAL-1 / JCM 10045 / NBRC 100440) (Methanococcus jannaschii).